A 349-amino-acid chain; its full sequence is uncharacterized protein (349 aa).

The signal sequence occupies residues M1 to A26. 2 disordered regions span residues G30–A113 and Y322–P349. The segment covering H39–G52 has biased composition (polar residues). The span at N90–E101 shows a compositional bias: pro residues.

Binds to numerous extracellular matrix proteins.

The protein resides in the secreted. It is found in the extracellular space. It localises to the extracellular matrix. This is an uncharacterized protein from Mus musculus (Mouse).